The sequence spans 404 residues: Argininosuccinate synthase (404 aa).

Residue 9 to 17 (AYSGGLDTS) coordinates ATP. An L-citrulline-binding site is contributed by Tyr86. ATP is bound at residue Gly116. Residues Thr118, Asn122, and Asp123 each contribute to the L-aspartate site. Asn122 contacts L-citrulline. 5 residues coordinate L-citrulline: Arg126, Ser174, Ser183, Glu259, and Tyr271.

The protein belongs to the argininosuccinate synthase family. Type 1 subfamily. Homotetramer.

Its subcellular location is the cytoplasm. The enzyme catalyses L-citrulline + L-aspartate + ATP = 2-(N(omega)-L-arginino)succinate + AMP + diphosphate + H(+). It functions in the pathway amino-acid biosynthesis; L-arginine biosynthesis; L-arginine from L-ornithine and carbamoyl phosphate: step 2/3. In Listeria welshimeri serovar 6b (strain ATCC 35897 / DSM 20650 / CCUG 15529 / CIP 8149 / NCTC 11857 / SLCC 5334 / V8), this protein is Argininosuccinate synthase.